A 168-amino-acid polypeptide reads, in one-letter code: Small ribosomal subunit protein uS5 (168 aa).

One can recognise an S5 DRBM domain in the interval 11 to 74 (YSEKVVKIDR…ESAKKHLVKI (64 aa)).

This sequence belongs to the universal ribosomal protein uS5 family. As to quaternary structure, part of the 30S ribosomal subunit. Contacts proteins S4 and S8.

Its function is as follows. With S4 and S12 plays an important role in translational accuracy. In terms of biological role, located at the back of the 30S subunit body where it stabilizes the conformation of the head with respect to the body. The chain is Small ribosomal subunit protein uS5 from Leptospira interrogans serogroup Icterohaemorrhagiae serovar copenhageni (strain Fiocruz L1-130).